A 458-amino-acid polypeptide reads, in one-letter code: ATP synthase subunit beta (458 aa).

148 to 155 (GGAGVGKT) contacts ATP.

Belongs to the ATPase alpha/beta chains family. In terms of assembly, F-type ATPases have 2 components, CF(1) - the catalytic core - and CF(0) - the membrane proton channel. CF(1) has five subunits: alpha(3), beta(3), gamma(1), delta(1), epsilon(1). CF(0) has three main subunits: a(1), b(2) and c(9-12). The alpha and beta chains form an alternating ring which encloses part of the gamma chain. CF(1) is attached to CF(0) by a central stalk formed by the gamma and epsilon chains, while a peripheral stalk is formed by the delta and b chains.

It is found in the cell inner membrane. It carries out the reaction ATP + H2O + 4 H(+)(in) = ADP + phosphate + 5 H(+)(out). Functionally, produces ATP from ADP in the presence of a proton gradient across the membrane. The catalytic sites are hosted primarily by the beta subunits. This Pseudomonas putida (strain GB-1) protein is ATP synthase subunit beta.